The sequence spans 290 residues: 4-diphosphocytidyl-2-C-methyl-D-erythritol kinase (290 aa).

The active site involves Lys-14. 103–113 (PMGGGLGGGSS) serves as a coordination point for ATP. Residue Asp-145 is part of the active site.

It belongs to the GHMP kinase family. IspE subfamily. In terms of assembly, homodimer.

It catalyses the reaction 4-CDP-2-C-methyl-D-erythritol + ATP = 4-CDP-2-C-methyl-D-erythritol 2-phosphate + ADP + H(+). It functions in the pathway isoprenoid biosynthesis; isopentenyl diphosphate biosynthesis via DXP pathway; isopentenyl diphosphate from 1-deoxy-D-xylulose 5-phosphate: step 3/6. In terms of biological role, catalyzes the phosphorylation of the position 2 hydroxy group of 4-diphosphocytidyl-2C-methyl-D-erythritol. This Pectobacterium carotovorum subsp. carotovorum (strain PC1) protein is 4-diphosphocytidyl-2-C-methyl-D-erythritol kinase.